The chain runs to 386 residues: Putative F-box/kelch-repeat protein At4g11750 (386 aa).

The 47-residue stretch at 5–51 folds into the F-box domain; the sequence is PVDLPYIPDDLLLNCLARVSRLYYPILSLVSKRFRSLVASLELYEIR. 3 Kelch repeats span residues 187–236, 238–285, and 287–324; these read KIYV…VYDG, LYLF…YGRS, and VLMW…GYSG.

This Arabidopsis thaliana (Mouse-ear cress) protein is Putative F-box/kelch-repeat protein At4g11750.